Reading from the N-terminus, the 211-residue chain is ATP phosphoribosyltransferase (211 aa).

This sequence belongs to the ATP phosphoribosyltransferase family. Short subfamily. Heteromultimer composed of HisG and HisZ subunits.

It is found in the cytoplasm. The enzyme catalyses 1-(5-phospho-beta-D-ribosyl)-ATP + diphosphate = 5-phospho-alpha-D-ribose 1-diphosphate + ATP. The protein operates within amino-acid biosynthesis; L-histidine biosynthesis; L-histidine from 5-phospho-alpha-D-ribose 1-diphosphate: step 1/9. Its function is as follows. Catalyzes the condensation of ATP and 5-phosphoribose 1-diphosphate to form N'-(5'-phosphoribosyl)-ATP (PR-ATP). Has a crucial role in the pathway because the rate of histidine biosynthesis seems to be controlled primarily by regulation of HisG enzymatic activity. The chain is ATP phosphoribosyltransferase from Pseudomonas syringae pv. tomato (strain ATCC BAA-871 / DC3000).